A 436-amino-acid polypeptide reads, in one-letter code: 3-ketoacyl-CoA thiolase (436 aa).

Residue Cys99 is the Acyl-thioester intermediate of the active site. Catalysis depends on proton acceptor residues His392 and Cys422.

The protein belongs to the thiolase-like superfamily. Thiolase family. As to quaternary structure, heterotetramer of two alpha chains (FadJ) and two beta chains (FadI).

The protein localises to the cytoplasm. The catalysed reaction is an acyl-CoA + acetyl-CoA = a 3-oxoacyl-CoA + CoA. It participates in lipid metabolism; fatty acid beta-oxidation. Its function is as follows. Catalyzes the final step of fatty acid oxidation in which acetyl-CoA is released and the CoA ester of a fatty acid two carbons shorter is formed. The polypeptide is 3-ketoacyl-CoA thiolase (Shewanella frigidimarina (strain NCIMB 400)).